A 310-amino-acid polypeptide reads, in one-letter code: Aspartate carbamoyltransferase catalytic subunit (310 aa).

Positions 59 and 60 each coordinate carbamoyl phosphate. Lysine 87 contributes to the L-aspartate binding site. Carbamoyl phosphate contacts are provided by arginine 109, histidine 139, and glutamine 142. Arginine 172 and arginine 224 together coordinate L-aspartate. Positions 265 and 266 each coordinate carbamoyl phosphate.

The protein belongs to the aspartate/ornithine carbamoyltransferase superfamily. ATCase family. Heterododecamer (2C3:3R2) of six catalytic PyrB chains organized as two trimers (C3), and six regulatory PyrI chains organized as three dimers (R2).

It carries out the reaction carbamoyl phosphate + L-aspartate = N-carbamoyl-L-aspartate + phosphate + H(+). It participates in pyrimidine metabolism; UMP biosynthesis via de novo pathway; (S)-dihydroorotate from bicarbonate: step 2/3. Catalyzes the condensation of carbamoyl phosphate and aspartate to form carbamoyl aspartate and inorganic phosphate, the committed step in the de novo pyrimidine nucleotide biosynthesis pathway. The sequence is that of Aspartate carbamoyltransferase catalytic subunit from Lactococcus lactis subsp. cremoris (strain MG1363).